A 307-amino-acid polypeptide reads, in one-letter code: Coenzyme PQQ synthesis protein B (307 aa).

Belongs to the PqqB family.

It participates in cofactor biosynthesis; pyrroloquinoline quinone biosynthesis. May be involved in the transport of PQQ or its precursor to the periplasm. In Gluconacetobacter diazotrophicus (strain ATCC 49037 / DSM 5601 / CCUG 37298 / CIP 103539 / LMG 7603 / PAl5), this protein is Coenzyme PQQ synthesis protein B.